The primary structure comprises 381 residues: cAMP-dependent protein kinase type I-beta regulatory subunit (381 aa).

Positions 1–136 (MASPSCFHSE…ALAKAISKNV (136 aa)) are dimerization and phosphorylation. Serine 3 is subject to Phosphoserine. Tyrosine 21 bears the 3'-nitrotyrosine mark. Positions 66–88 (LARQKSNSQCDSHDEEISPTPPN) are disordered. Phosphoserine is present on residues serine 77 and serine 83. A Phosphothreonine modification is found at threonine 85. Positions 96 to 100 (RRGGV) match the Pseudophosphorylation motif motif. Arginine 97 carries the post-translational modification Omega-N-methylarginine. Residues 137-254 (LFSH…SKVS), glutamate 202, arginine 211, 255-381 (ILES…SLTV), glutamate 326, and arginine 335 each bind 3',5'-cyclic AMP.

It belongs to the cAMP-dependent kinase regulatory chain family. As to quaternary structure, the inactive holoenzyme is composed of two regulatory chains and two catalytic chains. Activation by cAMP releases the two active catalytic monomers and the regulatory dimer. Interacts with PRKX; regulates this cAMP-dependent protein kinase. Interacts with smAKAP; this interaction may target PRKAR1B to the plasma membrane. The pseudophosphorylation site binds to the substrate-binding region of the catalytic chain, resulting in the inhibition of its activity. Four types of regulatory chains are found: I-alpha, I-beta, II-alpha, and II-beta. Their expression varies among tissues and is in some cases constitutive and in others inducible.

The protein localises to the cell membrane. Functionally, regulatory subunit of the cAMP-dependent protein kinases involved in cAMP signaling in cells. In Mus musculus (Mouse), this protein is cAMP-dependent protein kinase type I-beta regulatory subunit (Prkar1b).